Consider the following 442-residue polypeptide: CBL-interacting serine/threonine-protein kinase 14 (442 aa).

Residues 22-276 (YEVGKLVGCG…IEEIIHDPWF (255 aa)) form the Protein kinase domain. ATP is bound by residues 28–36 (VGCGAFAKV) and Lys51. Residue Asp144 is the Proton acceptor of the active site. The tract at residues 162–191 (DFGLSALTDQIRPDGLLHTLCGTPAYVAPE) is activation loop. At Ser166 the chain carries Phosphoserine. A Phosphothreonine modification is found at Thr180. One can recognise an NAF domain in the interval 305-329 (MGARRMNAFDIISGSPGFNLSGLFG). A PPI region spans residues 335 to 365 (DRVERFVSAWTAERVVERLEEIVSAENLTVA).

The protein belongs to the protein kinase superfamily. CAMK Ser/Thr protein kinase family. SNF1 subfamily. Interacts with CBL2. Interacts with CBL3. Interacts with CBL8. Interacts with CBL9. Interacts with KIN10 and KIN11. The cofactor is Mn(2+). Predominant in roots, cauline leaves, and flowers. Ubiquitous with highest expression in 7-day-old seedlings and flower buds, followed by that in cauline leaves and young siliques.

The protein resides in the cytoplasm. The protein localises to the nucleus. It carries out the reaction L-seryl-[protein] + ATP = O-phospho-L-seryl-[protein] + ADP + H(+). The enzyme catalyses L-threonyl-[protein] + ATP = O-phospho-L-threonyl-[protein] + ADP + H(+). Functionally, CIPK serine-threonine protein kinases interact with CBL proteins. Binding of a CBL protein to the regulatory NAF domain of CIPK protein lead to the activation of the kinase in a calcium-dependent manner. The sequence is that of CBL-interacting serine/threonine-protein kinase 14 (CIPK14) from Arabidopsis thaliana (Mouse-ear cress).